A 106-amino-acid chain; its full sequence is Trp operon repressor homolog (106 aa).

A DNA-binding region spans residues 59 to 82 (QREIQQILNTSAATITRGSNMIKI).

Belongs to the TrpR family. As to quaternary structure, homodimer.

The protein resides in the cytoplasm. Functionally, this protein is an aporepressor. When complexed with L-tryptophan it binds the operator region of the trp operon and prevents the initiation of transcription. The chain is Trp operon repressor homolog from Histophilus somni (strain 129Pt) (Haemophilus somnus).